A 102-amino-acid chain; its full sequence is Small ribosomal subunit protein uS10 (102 aa).

The protein belongs to the universal ribosomal protein uS10 family. Part of the 30S ribosomal subunit.

Involved in the binding of tRNA to the ribosomes. The polypeptide is Small ribosomal subunit protein uS10 (Streptomyces griseus subsp. griseus (strain JCM 4626 / CBS 651.72 / NBRC 13350 / KCC S-0626 / ISP 5235)).